A 112-amino-acid polypeptide reads, in one-letter code: UPF0235 protein RHE_CH03912 (112 aa).

This sequence belongs to the UPF0235 family.

The sequence is that of UPF0235 protein RHE_CH03912 from Rhizobium etli (strain ATCC 51251 / DSM 11541 / JCM 21823 / NBRC 15573 / CFN 42).